Here is a 132-residue protein sequence, read N- to C-terminus: UPF0102 protein Achl_2213 (132 aa).

It belongs to the UPF0102 family.

The sequence is that of UPF0102 protein Achl_2213 from Pseudarthrobacter chlorophenolicus (strain ATCC 700700 / DSM 12829 / CIP 107037 / JCM 12360 / KCTC 9906 / NCIMB 13794 / A6) (Arthrobacter chlorophenolicus).